Consider the following 487-residue polypeptide: Putative beta-glucosidase 35 (487 aa).

The N-terminal stretch at 1–27 (MGIRMGRRLLLITLLLGALLCNNVAYA) is a signal peptide. Glutamine 48 contacts a beta-D-glucoside. N-linked (GlcNAc...) asparagine glycosylation is found at asparagine 76 and asparagine 116. Residues histidine 151 and 200–201 (NE) each bind a beta-D-glucoside. Glutamate 201 functions as the Proton donor in the catalytic mechanism. Cysteine 220 and cysteine 228 form a disulfide bridge. Tyrosine 344 lines the a beta-D-glucoside pocket. N-linked (GlcNAc...) asparagine glycosylation is present at asparagine 369. Glutamate 414 serves as a coordination point for a beta-D-glucoside. The Nucleophile role is filled by glutamate 414. N-linked (GlcNAc...) asparagine glycans are attached at residues asparagine 418 and asparagine 419. Phenylalanine 458 lines the a beta-D-glucoside pocket.

This sequence belongs to the glycosyl hydrolase 1 family.

The catalysed reaction is Hydrolysis of terminal, non-reducing beta-D-glucosyl residues with release of beta-D-glucose.. This Oryza sativa subsp. japonica (Rice) protein is Putative beta-glucosidase 35 (BGLU35).